A 765-amino-acid chain; its full sequence is ATP-dependent RNA helicase DBP4 (765 aa).

A Q motif motif is present at residues 48-76 (SQFSDLPITENTLKGLKEATFVSLTDIQK). The Helicase ATP-binding domain occupies 79-253 (IPIALKGEDL…RLSLTNPNKI (175 aa)). Residue 92 to 99 (ARTGSGKT) participates in ATP binding. The DEAD box signature appears at 201–204 (DEAD). Residues 267–439 (SLEQYYVKVP…SIRPQLQSLC (173 aa)) enclose the Helicase C-terminal domain. Basic and acidic residues-rich tracts occupy residues 655-668 (KISD…ERQK) and 720-738 (PVSK…KSKN). The segment at 655-765 (KISDITDKEV…ESLTARLIGN (111 aa)) is disordered. Positions 744 to 756 (VEYDEPETLEDLE) are enriched in acidic residues.

It belongs to the DEAD box helicase family. DDX10/DBP4 subfamily. Interacts with the U3 and U14 snoRNAs. Associates with pre-ribosomal complexes.

The protein resides in the nucleus. Its subcellular location is the nucleolus. The enzyme catalyses ATP + H2O = ADP + phosphate + H(+). Functionally, ATP-dependent RNA helicase required for ribosome biogenesis. Involved in the release of U14 snoRNA in pre-ribosomal complexes. Required for pre-rRNA cleavage at site A2. The protein is ATP-dependent RNA helicase DBP4 (DBP4) of Candida albicans (strain SC5314 / ATCC MYA-2876) (Yeast).